Here is a 236-residue protein sequence, read N- to C-terminus: MSQEWKEYAKRVLDEWQPKTKLGMLVKEGQITDIHEIFRKGYQIKEPEIIDVLLPEVNARENQEILDIALTVRMTDSGRRVRFRVLAAVGNRDGYVGLGIGHGREVGIAIRKAINYAKLNIIEIKRGCGSWECRCRRPHSVPFTVEGKEGSVRVKLIPGPRGLGLVIGDVGKKILRLAGIQDVWSQTLGETRTTVNFAKAVFNALYNTNKVVVTPEMIERYGIVVGRAMPASFTLE.

Residues 61–124 (ENQEILDIAL…NYAKLNIIEI (64 aa)) enclose the S5 DRBM domain.

This sequence belongs to the universal ribosomal protein uS5 family. In terms of assembly, part of the 30S ribosomal subunit. Contacts protein S4.

With S4 and S12 plays an important role in translational accuracy. This Pyrococcus abyssi (strain GE5 / Orsay) protein is Small ribosomal subunit protein uS5.